A 259-amino-acid chain; its full sequence is UPF0246 protein PA14_18590 (259 aa).

Belongs to the UPF0246 family.

In Pseudomonas aeruginosa (strain UCBPP-PA14), this protein is UPF0246 protein PA14_18590.